A 130-amino-acid polypeptide reads, in one-letter code: ATP synthase epsilon chain (130 aa).

This sequence belongs to the ATPase epsilon chain family. In terms of assembly, F-type ATPases have 2 components, CF(1) - the catalytic core - and CF(0) - the membrane proton channel. CF(1) has five subunits: alpha(3), beta(3), gamma(1), delta(1), epsilon(1). CF(0) has three main subunits: a, b and c.

It localises to the cell inner membrane. Functionally, produces ATP from ADP in the presence of a proton gradient across the membrane. The protein is ATP synthase epsilon chain (atpC) of Fuscovulum blasticum (Rhodobacter blasticus).